The primary structure comprises 259 residues: Global transcriptional regulator CodY (259 aa).

The tract at residues 1–155 (MSLLSRMRKI…GATVVGMEIL (155 aa)) is GAF domain. The H-T-H motif DNA-binding region spans 203-222 (ASKIADRVGITRSVIVNALR). S215 is modified (phosphoserine).

It belongs to the CodY family.

It is found in the cytoplasm. In terms of biological role, DNA-binding global transcriptional regulator which is involved in the adaptive response to starvation and acts by directly or indirectly controlling the expression of numerous genes in response to nutrient availability. During rapid exponential growth, CodY is highly active and represses genes whose products allow adaptation to nutrient depletion. The polypeptide is Global transcriptional regulator CodY (Halalkalibacterium halodurans (strain ATCC BAA-125 / DSM 18197 / FERM 7344 / JCM 9153 / C-125) (Bacillus halodurans)).